Consider the following 397-residue polypeptide: Enoyl-[acyl-carrier-protein] reductase [NADH] (397 aa).

NAD(+) is bound by residues 48-53 (GASTGY), 74-75 (FE), 111-112 (DA), and 139-140 (LA). Residue tyrosine 225 participates in substrate binding. Tyrosine 235 functions as the Proton donor in the catalytic mechanism. Residues lysine 244 and 273–275 (VVT) contribute to the NAD(+) site.

The protein belongs to the TER reductase family. In terms of assembly, monomer.

It carries out the reaction a 2,3-saturated acyl-[ACP] + NAD(+) = a (2E)-enoyl-[ACP] + NADH + H(+). Its pathway is lipid metabolism; fatty acid biosynthesis. Its function is as follows. Involved in the final reduction of the elongation cycle of fatty acid synthesis (FAS II). Catalyzes the reduction of a carbon-carbon double bond in an enoyl moiety that is covalently linked to an acyl carrier protein (ACP). This chain is Enoyl-[acyl-carrier-protein] reductase [NADH], found in Pseudoalteromonas translucida (strain TAC 125).